The sequence spans 240 residues: Ribosomal RNA small subunit methyltransferase G (240 aa).

Residues Gly-80, Phe-85, 103-105 (DSS), 131-132 (AE), and Arg-150 contribute to the S-adenosyl-L-methionine site.

The protein belongs to the methyltransferase superfamily. RNA methyltransferase RsmG family.

Its subcellular location is the cytoplasm. Specifically methylates the N7 position of a guanine in 16S rRNA. The protein is Ribosomal RNA small subunit methyltransferase G of Thermoanaerobacter pseudethanolicus (strain ATCC 33223 / 39E) (Clostridium thermohydrosulfuricum).